Reading from the N-terminus, the 387-residue chain is Chorismate synthase (387 aa).

Arg40 and Arg46 together coordinate NADP(+). Residues 129-131, 250-251, Gly295, 310-314, and Arg336 each bind FMN; these read RSS, QA, and KPIPT.

Belongs to the chorismate synthase family. As to quaternary structure, homotetramer. FMNH2 is required as a cofactor.

The enzyme catalyses 5-O-(1-carboxyvinyl)-3-phosphoshikimate = chorismate + phosphate. It functions in the pathway metabolic intermediate biosynthesis; chorismate biosynthesis; chorismate from D-erythrose 4-phosphate and phosphoenolpyruvate: step 7/7. Its function is as follows. Catalyzes the anti-1,4-elimination of the C-3 phosphate and the C-6 proR hydrogen from 5-enolpyruvylshikimate-3-phosphate (EPSP) to yield chorismate, which is the branch point compound that serves as the starting substrate for the three terminal pathways of aromatic amino acid biosynthesis. This reaction introduces a second double bond into the aromatic ring system. This chain is Chorismate synthase, found in Desulforamulus reducens (strain ATCC BAA-1160 / DSM 100696 / MI-1) (Desulfotomaculum reducens).